A 302-amino-acid polypeptide reads, in one-letter code: Probable 2-(5''-triphosphoribosyl)-3'-dephosphocoenzyme-A synthase (302 aa).

The protein belongs to the CitG/MdcB family.

It carries out the reaction 3'-dephospho-CoA + ATP = 2'-(5''-triphospho-alpha-D-ribosyl)-3'-dephospho-CoA + adenine. This Salmonella gallinarum (strain 287/91 / NCTC 13346) protein is Probable 2-(5''-triphosphoribosyl)-3'-dephosphocoenzyme-A synthase.